We begin with the raw amino-acid sequence, 1422 residues long: YEATS domain-containing protein 2 (1422 aa).

Residue lysine 9 forms a Glycyl lysine isopeptide (Lys-Gly) (interchain with G-Cter in SUMO2) linkage. The stretch at 47–80 forms a coiled coil; that stretch reads KEQFALEMKNKEHEIEVIDQRLIEARRMMDKLRA. A Glycyl lysine isopeptide (Lys-Gly) (interchain with G-Cter in SUMO2) cross-link involves residue lysine 113. Residues 117-198 are disordered; that stretch reads ESPSRSSSPA…KTEQRNADLT (82 aa). Serine 118, serine 120, and serine 157 each carry phosphoserine. Positions 119 to 148 are enriched in polar residues; that stretch reads PSRSSSPANQRAETPSANHSESDSLSQHND. Residues 149 to 165 are compositionally biased toward basic and acidic residues; it reads FLSDKDNNSNMDIEERL. The segment covering 166–176 has biased composition (polar residues); the sequence is SNNMEQRPSRN. Basic and acidic residues predominate over residues 177-198; sequence TGRDTSRITGSHKTEQRNADLT. Lysine 189 is covalently cross-linked (Glycyl lysine isopeptide (Lys-Gly) (interchain with G-Cter in SUMO2)). Residues 200–345 enclose the YEATS domain; the sequence is ETSRLFVKKT…EDCIYPQSSE (146 aa). Histone H3K27cr binding regions lie at residues 259 to 261 and 282 to 284; these read HPS and WGE. A Glycyl lysine isopeptide (Lys-Gly) (interchain with G-Cter in SUMO2) cross-link involves residue lysine 370. At threonine 407 the chain carries Phosphothreonine. A phosphoserine mark is found at serine 447, serine 463, serine 465, serine 471, and serine 473. Positions 465–486 are disordered; that stretch reads SPISTPSPSPLPRTPTSTPVHV. Phosphothreonine is present on threonine 478. Lysine 487 is covalently cross-linked (Glycyl lysine isopeptide (Lys-Gly) (interchain with G-Cter in SUMO2)). A compositionally biased stretch (polar residues) spans 513 to 535; sequence TTPSTGSPTNKISTASQVSQGTG. The tract at residues 513-540 is disordered; the sequence is TTPSTGSPTNKISTASQVSQGTGSPVPK. Serine 536 bears the Phosphoserine mark. Lysine 552 participates in a covalent cross-link: Glycyl lysine isopeptide (Lys-Gly) (interchain with G-Cter in SUMO2). Serine 575 carries the phosphoserine modification. A Glycyl lysine isopeptide (Lys-Gly) (interchain with G-Cter in SUMO2) cross-link involves residue lysine 592. Phosphoserine is present on serine 627. Residues lysine 649 and lysine 773 each participate in a glycyl lysine isopeptide (Lys-Gly) (interchain with G-Cter in SUMO2) cross-link. The disordered stretch occupies residues 794–842; it reads GSAASGGSGAGGGGGGGGGGGSGSGGGGSTGGGGGTAGGGTQSTAGPGG. Gly residues predominate over residues 797 to 842; it reads ASGGSGAGGGGGGGGGGGSGSGGGGSTGGGGGTAGGGTQSTAGPGG. A Glycyl lysine isopeptide (Lys-Gly) (interchain with G-Cter in SUMO2) cross-link involves residue lysine 923. Residue lysine 1110 forms a Glycyl lysine isopeptide (Lys-Gly) (interchain with G-Cter in SUMO1); alternate linkage. Lysine 1110 is covalently cross-linked (Glycyl lysine isopeptide (Lys-Gly) (interchain with G-Cter in SUMO2); alternate). Lysine 1130 is covalently cross-linked (Glycyl lysine isopeptide (Lys-Gly) (interchain with G-Cter in SUMO2)). The residue at position 1219 (threonine 1219) is a Phosphothreonine. Glycyl lysine isopeptide (Lys-Gly) (interchain with G-Cter in SUMO2) cross-links involve residues lysine 1222 and lysine 1285.

As to quaternary structure, component of the ADA2A-containing complex (ATAC), composed of KAT14, KAT2A, TADA2L, TADA3L, ZZ3, MBIP, WDR5, YEATS2, SGF29 and DR1.

It localises to the nucleus. In terms of biological role, chromatin reader component of the ATAC complex, a complex with histone acetyltransferase activity on histones H3 and H4. YEATS2 specifically recognizes and binds histone H3 crotonylated at 'Lys-27' (H3K27cr). Crotonylation marks active promoters and enhancers and confers resistance to transcriptional repressors. The sequence is that of YEATS domain-containing protein 2 from Homo sapiens (Human).